Reading from the N-terminus, the 407-residue chain is Peptide chain release factor subunit 1 (407 aa).

This sequence belongs to the eukaryotic release factor 1 family. Heterodimer of two subunits, one of which binds GTP.

The protein resides in the cytoplasm. Directs the termination of nascent peptide synthesis (translation) in response to the termination codons UAA, UAG and UGA. This chain is Peptide chain release factor subunit 1 (prf1), found in Archaeoglobus fulgidus (strain ATCC 49558 / DSM 4304 / JCM 9628 / NBRC 100126 / VC-16).